A 56-amino-acid chain; its full sequence is 4Fe-4S ferredoxin FdxA (56 aa).

4Fe-4S ferredoxin-type domains follow at residues 1–28 (MAYV…SSGD) and 29–56 (DRYV…PVQA). Residues C9, C12, C15, C19, C38, C41, C44, and C48 each contribute to the [4Fe-4S] cluster site.

[4Fe-4S] cluster serves as cofactor.

Ferredoxins are iron-sulfur proteins that transfer electrons in a wide variety of metabolic reactions. This Gottschalkia acidurici (strain ATCC 7906 / DSM 604 / BCRC 14475 / CIP 104303 / KCTC 5404 / NCIMB 10678 / 9a) (Clostridium acidurici) protein is 4Fe-4S ferredoxin FdxA.